A 344-amino-acid chain; its full sequence is Adenine deaminase (344 aa).

Residues His-24, His-26, and His-204 each coordinate Zn(2+). Residue Glu-207 is the Proton donor of the active site. Asp-285 is a Zn(2+) binding site. Asp-286 is a substrate binding site.

Belongs to the metallo-dependent hydrolases superfamily. Adenosine and AMP deaminases family. Adenine deaminase type 2 subfamily. Zn(2+) serves as cofactor.

It carries out the reaction adenine + H2O + H(+) = hypoxanthine + NH4(+). In terms of biological role, catalyzes the hydrolytic deamination of adenine to hypoxanthine. Plays an important role in the purine salvage pathway and in nitrogen catabolism. This Caulobacter vibrioides (strain ATCC 19089 / CIP 103742 / CB 15) (Caulobacter crescentus) protein is Adenine deaminase.